A 317-amino-acid polypeptide reads, in one-letter code: Glycine--tRNA ligase alpha subunit (317 aa).

Belongs to the class-II aminoacyl-tRNA synthetase family. In terms of assembly, tetramer of two alpha and two beta subunits.

The protein resides in the cytoplasm. It catalyses the reaction tRNA(Gly) + glycine + ATP = glycyl-tRNA(Gly) + AMP + diphosphate. The protein is Glycine--tRNA ligase alpha subunit of Acidovorax ebreus (strain TPSY) (Diaphorobacter sp. (strain TPSY)).